We begin with the raw amino-acid sequence, 205 residues long: Polyamine-modulated factor 1 (205 aa).

The disordered stretch occupies residues 1–28 (MAEASSVNVGSGCAEKGPEELSQEPARP). Residues 140-190 (YLLQQRDALQRRVQRQEAENRQLADAVLAGRRQLEELQLQAQARQQAWQAL) are a coiled coil.

Component of the MIS12 complex composed of MIS12, DSN1, NSL1 and PMF1. Interacts with COPS7A. Interacts via its coiled-coil domain with the leucine-zipper domain of NFE2L2. The interaction with NFE2L2 is required for the transcriptional regulation of SSAT.

The protein resides in the nucleus. Its subcellular location is the chromosome. It localises to the centromere. The protein localises to the kinetochore. Functionally, part of the MIS12 complex which is required for normal chromosome alignment and segregation and kinetochore formation during mitosis. May act as a cotranscription partner of NFE2L2 involved in regulation of polyamine-induced transcription of SSAT. This is Polyamine-modulated factor 1 (PMF1) from Bos taurus (Bovine).